The following is a 476-amino-acid chain: Glutamate--tRNA ligase 1 (476 aa).

The 'HIGH' region signature appears at 9-19; that stretch reads PSPTGFLHIGG. Residues 238 to 242 carry the 'KMSKS' region motif; sequence KLSKR. K241 serves as a coordination point for ATP.

The protein belongs to the class-I aminoacyl-tRNA synthetase family. Glutamate--tRNA ligase type 1 subfamily. In terms of assembly, monomer.

Its subcellular location is the cytoplasm. The enzyme catalyses tRNA(Glu) + L-glutamate + ATP = L-glutamyl-tRNA(Glu) + AMP + diphosphate. Its function is as follows. Catalyzes the attachment of glutamate to tRNA(Glu) in a two-step reaction: glutamate is first activated by ATP to form Glu-AMP and then transferred to the acceptor end of tRNA(Glu). The protein is Glutamate--tRNA ligase 1 of Bartonella tribocorum (strain CIP 105476 / IBS 506).